The primary structure comprises 201 residues: dCTP deaminase, dUMP-forming (201 aa).

DCTP is bound by residues 101–106 (KSSLGR), D119, 127–129 (TLE), Q148, Y162, and Q174. E129 acts as the Proton donor/acceptor in catalysis. A compositionally biased stretch (polar residues) spans 166-183 (EYSSRYQGQRGPTASRSF). The tract at residues 166–201 (EYSSRYQGQRGPTASRSFLNFHRTDVSGTEAGRSSS) is disordered.

This sequence belongs to the dCTP deaminase family. In terms of assembly, homotrimer.

It catalyses the reaction dCTP + 2 H2O = dUMP + NH4(+) + diphosphate. Its pathway is pyrimidine metabolism; dUMP biosynthesis; dUMP from dCTP: step 1/1. Functionally, bifunctional enzyme that catalyzes both the deamination of dCTP to dUTP and the hydrolysis of dUTP to dUMP without releasing the toxic dUTP intermediate. The protein is dCTP deaminase, dUMP-forming of Leifsonia xyli subsp. xyli (strain CTCB07).